The sequence spans 462 residues: Bifunctional protein HldE (462 aa).

The segment at 1–309 (MKPRILVLGD…EYERSIRKAP (309 aa)) is ribokinase. Residue 186 to 189 (NKKE) coordinates ATP. The active site involves D254. Residues 336–462 (FTNGCFDILH…TAIVERMRSC (127 aa)) form a cytidylyltransferase region.

The protein in the N-terminal section; belongs to the carbohydrate kinase PfkB family. This sequence in the C-terminal section; belongs to the cytidylyltransferase family. In terms of assembly, homodimer.

It carries out the reaction D-glycero-beta-D-manno-heptose 7-phosphate + ATP = D-glycero-beta-D-manno-heptose 1,7-bisphosphate + ADP + H(+). The catalysed reaction is D-glycero-beta-D-manno-heptose 1-phosphate + ATP + H(+) = ADP-D-glycero-beta-D-manno-heptose + diphosphate. Its pathway is nucleotide-sugar biosynthesis; ADP-L-glycero-beta-D-manno-heptose biosynthesis; ADP-L-glycero-beta-D-manno-heptose from D-glycero-beta-D-manno-heptose 7-phosphate: step 1/4. It participates in nucleotide-sugar biosynthesis; ADP-L-glycero-beta-D-manno-heptose biosynthesis; ADP-L-glycero-beta-D-manno-heptose from D-glycero-beta-D-manno-heptose 7-phosphate: step 3/4. Its function is as follows. Catalyzes the phosphorylation of D-glycero-D-manno-heptose 7-phosphate at the C-1 position to selectively form D-glycero-beta-D-manno-heptose-1,7-bisphosphate. Functionally, catalyzes the ADP transfer from ATP to D-glycero-beta-D-manno-heptose 1-phosphate, yielding ADP-D-glycero-beta-D-manno-heptose. This is Bifunctional protein HldE from Nitratiruptor sp. (strain SB155-2).